The primary structure comprises 141 residues: Lysozyme 1 (141 aa).

The first 19 residues, 1 to 19 (MKFFIVLVAALALAAPAMG), serve as a signal peptide directing secretion. The region spanning 20–141 (KTFTRCSLAR…GSLPSINDCF (122 aa)) is the C-type lysozyme domain. Intrachain disulfides connect Cys-25-Cys-140, Cys-46-Cys-130, Cys-81-Cys-97, and Cys-93-Cys-111. The active site involves Glu-51. N-linked (GlcNAc...) asparagine glycosylation occurs at Asn-65. Asp-69 is a catalytic residue. Asn-104 is a glycosylation site (N-linked (GlcNAc...) asparagine).

This sequence belongs to the glycosyl hydrolase 22 family.

The enzyme catalyses Hydrolysis of (1-&gt;4)-beta-linkages between N-acetylmuramic acid and N-acetyl-D-glucosamine residues in a peptidoglycan and between N-acetyl-D-glucosamine residues in chitodextrins.. Its function is as follows. May not function as a self-defense protein, but as a digestive enzyme, probably in the gut of the insect body. Inactive towards Micrococcus luteus. Active toward glycol chitin. The polypeptide is Lysozyme 1 (Musca domestica (House fly)).